Reading from the N-terminus, the 326-residue chain is Structural protein ORF326a (326 aa).

Residues 1–28 (MSTTFRGKKEEEEEEEEEKEEKEEELFN) are disordered. Residues 11–26 (EEEEEEEEKEEKEEEL) show a composition bias toward acidic residues.

The protein resides in the virion. The chain is Structural protein ORF326a from Acidianus two-tailed virus (ATV).